A 172-amino-acid chain; its full sequence is MAEKRNIFLVGPMGAGKSTIGRHIADQLHLEFVDSDQEIERRTGADIAWVFDLEGEEGFRLREESVIGDLTEMQGIVLATGGGSVMSKEVRNKLSARGIVVYLETPIEKQVARTQRDKRRPLLQTEEAPRDVLERLAEEREPLYKEVADFVVRTDEQSAKVVANQIIEKLDF.

An ATP-binding site is contributed by 14-19 (GAGKST). Serine 18 provides a ligand contact to Mg(2+). Substrate-binding residues include aspartate 36, arginine 60, and glycine 82. An ATP-binding site is contributed by arginine 120. Residue arginine 140 coordinates substrate. Glutamine 157 is an ATP binding site.

The protein belongs to the shikimate kinase family. As to quaternary structure, monomer. It depends on Mg(2+) as a cofactor.

It localises to the cytoplasm. The enzyme catalyses shikimate + ATP = 3-phosphoshikimate + ADP + H(+). It functions in the pathway metabolic intermediate biosynthesis; chorismate biosynthesis; chorismate from D-erythrose 4-phosphate and phosphoenolpyruvate: step 5/7. Catalyzes the specific phosphorylation of the 3-hydroxyl group of shikimic acid using ATP as a cosubstrate. The chain is Shikimate kinase from Pseudoalteromonas translucida (strain TAC 125).